The chain runs to 438 residues: 3-phosphoshikimate 1-carboxyvinyltransferase (438 aa).

3-phosphoshikimate-binding residues include Lys-25, Ser-26, and Arg-30. Phosphoenolpyruvate is bound at residue Lys-25. Residues Gly-99 and Arg-128 each coordinate phosphoenolpyruvate. Residues Ser-173, Gln-175, Asp-325, and Lys-352 each contribute to the 3-phosphoshikimate site. Gln-175 provides a ligand contact to phosphoenolpyruvate. Asp-325 functions as the Proton acceptor in the catalytic mechanism. Phosphoenolpyruvate is bound by residues Arg-356 and Arg-398.

The protein belongs to the EPSP synthase family. In terms of assembly, monomer.

It localises to the cytoplasm. It catalyses the reaction 3-phosphoshikimate + phosphoenolpyruvate = 5-O-(1-carboxyvinyl)-3-phosphoshikimate + phosphate. It participates in metabolic intermediate biosynthesis; chorismate biosynthesis; chorismate from D-erythrose 4-phosphate and phosphoenolpyruvate: step 6/7. Its function is as follows. Catalyzes the transfer of the enolpyruvyl moiety of phosphoenolpyruvate (PEP) to the 5-hydroxyl of shikimate-3-phosphate (S3P) to produce enolpyruvyl shikimate-3-phosphate and inorganic phosphate. In Prochlorococcus marinus subsp. pastoris (strain CCMP1986 / NIES-2087 / MED4), this protein is 3-phosphoshikimate 1-carboxyvinyltransferase.